A 282-amino-acid chain; its full sequence is Probable endonuclease 4 (282 aa).

Zn(2+) is bound by residues histidine 67, histidine 107, glutamate 144, aspartate 178, histidine 181, histidine 215, aspartate 228, histidine 230, and glutamate 260.

The protein belongs to the AP endonuclease 2 family. The cofactor is Zn(2+).

The catalysed reaction is Endonucleolytic cleavage to 5'-phosphooligonucleotide end-products.. Endonuclease IV plays a role in DNA repair. It cleaves phosphodiester bonds at apurinic or apyrimidinic (AP) sites, generating a 3'-hydroxyl group and a 5'-terminal sugar phosphate. The chain is Probable endonuclease 4 from Methanoculleus marisnigri (strain ATCC 35101 / DSM 1498 / JR1).